Here is a 155-residue protein sequence, read N- to C-terminus: 6,7-dimethyl-8-ribityllumazine synthase (155 aa).

Residues Phe-23, 57–59, and 81–83 contribute to the 5-amino-6-(D-ribitylamino)uracil site; these read AYE and AVI. Residue 86-87 coordinates (2S)-2-hydroxy-3-oxobutyl phosphate; sequence AT. The active-site Proton donor is His-89. Phe-114 serves as a coordination point for 5-amino-6-(D-ribitylamino)uracil. Residue Arg-128 participates in (2S)-2-hydroxy-3-oxobutyl phosphate binding.

This sequence belongs to the DMRL synthase family.

It carries out the reaction (2S)-2-hydroxy-3-oxobutyl phosphate + 5-amino-6-(D-ribitylamino)uracil = 6,7-dimethyl-8-(1-D-ribityl)lumazine + phosphate + 2 H2O + H(+). It participates in cofactor biosynthesis; riboflavin biosynthesis; riboflavin from 2-hydroxy-3-oxobutyl phosphate and 5-amino-6-(D-ribitylamino)uracil: step 1/2. Catalyzes the formation of 6,7-dimethyl-8-ribityllumazine by condensation of 5-amino-6-(D-ribitylamino)uracil with 3,4-dihydroxy-2-butanone 4-phosphate. This is the penultimate step in the biosynthesis of riboflavin. In Desulfotalea psychrophila (strain LSv54 / DSM 12343), this protein is 6,7-dimethyl-8-ribityllumazine synthase.